Consider the following 223-residue polypeptide: Imidazoleglycerol-phosphate dehydratase (223 aa).

The protein belongs to the imidazoleglycerol-phosphate dehydratase family.

It carries out the reaction D-erythro-1-(imidazol-4-yl)glycerol 3-phosphate = 3-(imidazol-4-yl)-2-oxopropyl phosphate + H2O. Its pathway is amino-acid biosynthesis; L-histidine biosynthesis; L-histidine from 5-phospho-alpha-D-ribose 1-diphosphate: step 6/9. This chain is Imidazoleglycerol-phosphate dehydratase (HIS3), found in Candida albicans (Yeast).